A 305-amino-acid chain; its full sequence is UDP-3-O-acyl-N-acetylglucosamine deacetylase (305 aa).

Zn(2+) is bound by residues His-79, His-238, and Asp-242. Residue His-265 is the Proton donor of the active site.

This sequence belongs to the LpxC family. Zn(2+) is required as a cofactor.

It catalyses the reaction a UDP-3-O-[(3R)-3-hydroxyacyl]-N-acetyl-alpha-D-glucosamine + H2O = a UDP-3-O-[(3R)-3-hydroxyacyl]-alpha-D-glucosamine + acetate. Its pathway is glycolipid biosynthesis; lipid IV(A) biosynthesis; lipid IV(A) from (3R)-3-hydroxytetradecanoyl-[acyl-carrier-protein] and UDP-N-acetyl-alpha-D-glucosamine: step 2/6. Its function is as follows. Catalyzes the hydrolysis of UDP-3-O-myristoyl-N-acetylglucosamine to form UDP-3-O-myristoylglucosamine and acetate, the committed step in lipid A biosynthesis. This Proteus mirabilis (strain HI4320) protein is UDP-3-O-acyl-N-acetylglucosamine deacetylase.